The sequence spans 87 residues: Small ribosomal subunit protein uS17 (87 aa).

This sequence belongs to the universal ribosomal protein uS17 family. In terms of assembly, part of the 30S ribosomal subunit.

In terms of biological role, one of the primary rRNA binding proteins, it binds specifically to the 5'-end of 16S ribosomal RNA. The chain is Small ribosomal subunit protein uS17 from Anoxybacillus flavithermus (strain DSM 21510 / WK1).